A 370-amino-acid polypeptide reads, in one-letter code: Aspartate beta-hydroxylase domain-containing protein 2 (370 aa).

Residues 1–57 (MVWALPRTSSPSCIAPSYKPDSGWIKMSAEWLIDWSCLLNGLRDLIAGCIQAVRDCN) lie on the Cytoplasmic side of the membrane. Residues 58 to 78 (SFALTTVICLLMLFAWYCYRV) traverse the membrane as a helical segment. Over 79–370 (GKDQPRSPFA…ALDSIFAPGR (292 aa)) the chain is Lumenal. Residue asparagine 212 is glycosylated (N-linked (GlcNAc...) asparagine). Tryptophan 229 and serine 273 together coordinate 2-oxoglutarate. Residue histidine 284 coordinates Fe cation. 2-oxoglutarate is bound at residue 293 to 295 (RCH). Histidine 329 contacts Fe cation. Arginine 342 is a binding site for 2-oxoglutarate.

This sequence belongs to the aspartyl/asparaginyl beta-hydroxylase family. It depends on Fe cation as a cofactor.

The protein localises to the membrane. In terms of biological role, may function as 2-oxoglutarate-dependent dioxygenase. The chain is Aspartate beta-hydroxylase domain-containing protein 2 (asphd2) from Xenopus tropicalis (Western clawed frog).